The chain runs to 351 residues: Probable dual-specificity RNA methyltransferase RlmN (351 aa).

Glu-102 serves as the catalytic Proton acceptor. The 230-residue stretch at Asp-110–Asp-339 folds into the Radical SAM core domain. A disulfide bridge links Cys-117 with Cys-344. [4Fe-4S] cluster is bound by residues Cys-124, Cys-128, and Cys-131. Residues Gly-171–Glu-172, Ser-203, Ser-226–Asn-228, and Asn-302 contribute to the S-adenosyl-L-methionine site. Cys-344 (S-methylcysteine intermediate) is an active-site residue.

Belongs to the radical SAM superfamily. RlmN family. [4Fe-4S] cluster serves as cofactor.

The protein localises to the cytoplasm. It catalyses the reaction adenosine(2503) in 23S rRNA + 2 reduced [2Fe-2S]-[ferredoxin] + 2 S-adenosyl-L-methionine = 2-methyladenosine(2503) in 23S rRNA + 5'-deoxyadenosine + L-methionine + 2 oxidized [2Fe-2S]-[ferredoxin] + S-adenosyl-L-homocysteine. The enzyme catalyses adenosine(37) in tRNA + 2 reduced [2Fe-2S]-[ferredoxin] + 2 S-adenosyl-L-methionine = 2-methyladenosine(37) in tRNA + 5'-deoxyadenosine + L-methionine + 2 oxidized [2Fe-2S]-[ferredoxin] + S-adenosyl-L-homocysteine. Specifically methylates position 2 of adenine 2503 in 23S rRNA and position 2 of adenine 37 in tRNAs. The polypeptide is Probable dual-specificity RNA methyltransferase RlmN (Leptospira borgpetersenii serovar Hardjo-bovis (strain JB197)).